Consider the following 142-residue polypeptide: Transcriptional regulator MraZ (142 aa).

2 SpoVT-AbrB domains span residues 5-47 (THTP…PAPE) and 76-119 (AHDE…DRVA).

It belongs to the MraZ family. In terms of assembly, forms oligomers.

It is found in the cytoplasm. The protein resides in the nucleoid. The chain is Transcriptional regulator MraZ from Salinispora arenicola (strain CNS-205).